The sequence spans 292 residues: MAVPTELDGGSVKETAAEEESRVLAPGAAPFGNFPHYSRFHPPEQRLRLLPPELLRQLFPESPENGPILGLDVGCNSGDLSVALYKHFLSLPDGETCSDASREFRLLCCDIDPVLVKRAEKECPFPDALTFITLDFMNQRTRKVLLSSFLSQFGRSVFDIGFCMSITMWIHLNHGDHGLWEFLAHLSSLCHYLLVEPQPWKCYRAAARRLRKLGLHDFDHFHSLAIRGDMPNQIVQILTQDHGMELICCFGNTSWDRSLLLFRAKQTIETHPIPESLIEKGKEKNRLSFQKQ.

The interval 1 to 21 is disordered; it reads MAVPTELDGGSVKETAAEEES. Residues R46, N76, D110, 135 to 136, and M164 each bind S-adenosyl-L-methionine; that span reads DF. Positions 53-274 constitute a Bin3-type SAM domain; that stretch reads ELLRQLFPES…KQTIETHPIP (222 aa).

This sequence belongs to the methyltransferase superfamily. In terms of assembly, interacts with DICER1; the interaction may be mediated by RNA.

It is found in the cytoplasm. The catalysed reaction is a 5'-end 5'-phospho-ribonucleoside-RNA + S-adenosyl-L-methionine = a 5'-end (5'-methylphospho)-ribonucleoside-RNA + S-adenosyl-L-homocysteine. The enzyme catalyses a 5'-end 5'-phospho-ribonucleoside-RNA + 2 S-adenosyl-L-methionine = a 5'-end (5'-bismethylphospho)-ribonucleoside-RNA + 2 S-adenosyl-L-homocysteine. Functionally, O-methyltransferase that specifically monomethylates 5'-monophosphate of cytoplasmic histidyl tRNA (tRNA(His)), acting as a capping enzyme by protecting tRNA(His) from cleavage by DICER1. Also able, with less efficiently, to methylate the 5' monophosphate of a subset of pre-miRNAs, acting as a negative regulator of miRNA processing. The 5' monophosphate of pre-miRNAs is recognized by DICER1 and is required for pre-miRNAs processing: methylation at this position reduces the processing of pre-miRNAs by DICER1. Was also reported to mediate dimethylation of pre-miR-145; however dimethylation cannot be reproduced by another group which observes a monomethylation of pre-miR-145. In Homo sapiens (Human), this protein is RNA 5'-monophosphate methyltransferase.